A 234-amino-acid chain; its full sequence is Protein CIST1 (234 aa).

The signal sequence occupies residues 1–24 (MACPQLPPLLLLVLVVLLKAGVNY). Residues 25–180 (NTPFTDIVTS…GPRELHRNPS (156 aa)) lie on the Extracellular side of the membrane. Polar residues predominate over residues 41–121 (SPVSSLISSP…THPSSGSPSA (81 aa)). Positions 41 to 174 (SPVSSLISSP…PAPGDTGPRE (134 aa)) are disordered. Residues 122–140 (ELTPSSHSTLPSSESLTPH) are compositionally biased toward low complexity. Positions 141–159 (WSPTSHSPGTEPLTSTDQT) are enriched in polar residues. The chain crosses the membrane as a helical span at residues 181-201 (VVVVVCLLVSLLLIGSVVMAV). The Cytoplasmic segment spans residues 202–234 (RFCHRNESKFENLDEVSMGSVNDRLSFAHHLQE).

Its subcellular location is the membrane. This chain is Protein CIST1, found in Homo sapiens (Human).